Consider the following 267-residue polypeptide: Glutamate racemase (267 aa).

Residues 10–11 (DS) and 42–43 (YG) contribute to the substrate site. C73 (proton donor/acceptor) is an active-site residue. Substrate is bound at residue 74–75 (NT). The active-site Proton donor/acceptor is C183. Position 184-185 (184-185 (TH)) interacts with substrate.

Belongs to the aspartate/glutamate racemases family.

The catalysed reaction is L-glutamate = D-glutamate. Its pathway is cell wall biogenesis; peptidoglycan biosynthesis. Functionally, provides the (R)-glutamate required for cell wall biosynthesis. This chain is Glutamate racemase, found in Limosilactobacillus reuteri (strain DSM 20016) (Lactobacillus reuteri).